Consider the following 315-residue polypeptide: MTIDSGFNHITVLLDEAVEALAVRADGCYLDGTFGRGGHSRLILSQLGSDGKLLGFDKDPQAIATGQALAAEDGRFVVVQRSFAELGAEVAERGMAGKVAGVLLDLGVSSPQLDDPERGFSFMNDGPLDMRMDPTRGVSAAQFIATAPVEEIARVFKEYGEERFAGRMARAVVERREIQPFERTADLAEVLKVANPAWEKGKNPATRAFQGLRIHVNNELGDLEAGLEAALEALEVGGRLVVISFHSLEDRIVKLFMRRLVKGESDNLPRNLPVRFEAFVPKIKIHGKAQFASEAELKANPRSRSAVMRVAEKLR.

S-adenosyl-L-methionine is bound by residues 37-39 (GGH), Asp57, Phe83, Asp105, and Gln112.

Belongs to the methyltransferase superfamily. RsmH family.

It localises to the cytoplasm. It carries out the reaction cytidine(1402) in 16S rRNA + S-adenosyl-L-methionine = N(4)-methylcytidine(1402) in 16S rRNA + S-adenosyl-L-homocysteine + H(+). Specifically methylates the N4 position of cytidine in position 1402 (C1402) of 16S rRNA. In Pseudomonas fluorescens (strain SBW25), this protein is Ribosomal RNA small subunit methyltransferase H.